An 883-amino-acid chain; its full sequence is Serine/threonine-protein kinase greatwall (883 aa).

Residue Met-1 is modified to N-acetylmethionine. Residues 1-23 (MEPTMGGEMESGGGAATGECVNR) form a disordered region. The region spanning 35-839 (FTIVKPISRG…MKELKHHPLF (805 aa)) is the Protein kinase domain. ATP is bound by residues 41–49 (ISRGAFGKV) and Lys-62. Asp-156 (proton acceptor) is an active-site residue. 2 positions are modified to phosphothreonine: Thr-209 and Thr-224. Phosphoserine is present on Ser-295. The disordered stretch occupies residues 298 to 317 (RLATSSTSSPSHTFISSMES). A compositionally biased stretch (low complexity) spans 301-314 (TSSTSSPSHTFISS). A phosphoserine mark is found at Ser-373 and Ser-456. Residues 511–530 (ENVGSSFTDKHQTPEKSPVP) form a disordered region. A Phosphothreonine modification is found at Thr-523. Phosphoserine occurs at positions 556 and 560. The interval 569–597 (IHMDSDSSFPGISIMESPLGGQSLDPDKN) is disordered. Ser-635, Ser-661, and Ser-672 each carry phosphoserine. The segment at 706-737 (RSDMPYQQTPNQVKSETPYRTPKSVRRGAAPV) is disordered. Residues 710–720 (PYQQTPNQVKS) show a composition bias toward polar residues. Thr-726 is subject to Phosphothreonine. Ser-729 carries the phosphoserine modification. Thr-745 bears the Phosphothreonine; by CDK1 mark. Residues 840-883 (SGVDWENLQHQKMPFIPQPDDETDTSYFEARNNAQHLTVSGFSL) form the AGC-kinase C-terminal domain. Ser-879 and Ser-882 each carry phosphoserine.

The protein belongs to the protein kinase superfamily. AGC Ser/Thr protein kinase family. Phosphorylation at Thr-745 by CDK1 during M phase activates its kinase activity. Maximum phosphorylation occurs in prometaphase.

Its subcellular location is the cytoplasm. It is found in the cytoskeleton. The protein localises to the microtubule organizing center. The protein resides in the centrosome. It localises to the nucleus. The catalysed reaction is L-seryl-[protein] + ATP = O-phospho-L-seryl-[protein] + ADP + H(+). It catalyses the reaction L-threonyl-[protein] + ATP = O-phospho-L-threonyl-[protein] + ADP + H(+). Functionally, serine/threonine kinase that plays a key role in M phase by acting as a regulator of mitosis entry and maintenance. Acts by promoting the inactivation of protein phosphatase 2A (PP2A) during M phase: does not directly inhibit PP2A but acts by mediating phosphorylation and subsequent activation of ARPP19 and ENSA at 'Ser-62' and 'Ser-67', respectively. ARPP19 and ENSA are phosphatase inhibitors that specifically inhibit the PPP2R2D (PR55-delta) subunit of PP2A. Inactivation of PP2A during M phase is essential to keep cyclin-B1-CDK1 activity high. Following DNA damage, it is also involved in checkpoint recovery by being inhibited. In Bos taurus (Bovine), this protein is Serine/threonine-protein kinase greatwall (MASTL).